We begin with the raw amino-acid sequence, 500 residues long: Protein FAM114A2 (500 aa).

The disordered stretch occupies residues 1-82; sequence MSNKDDLETA…AAGKETVSKD (82 aa). Phosphoserine occurs at positions 93, 152, and 215.

It belongs to the FAM114 family.

The polypeptide is Protein FAM114A2 (FAM114A1) (Bos taurus (Bovine)).